The primary structure comprises 294 residues: Acetyl-coenzyme A carboxylase carboxyl transferase subunit beta (294 aa).

The region spanning Ile-30 to Glu-294 is the CoA carboxyltransferase N-terminal domain. Zn(2+) contacts are provided by Cys-34, Cys-37, Cys-53, and Cys-56. The C4-type zinc finger occupies Cys-34–Cys-56.

Belongs to the AccD/PCCB family. As to quaternary structure, acetyl-CoA carboxylase is a heterohexamer composed of biotin carboxyl carrier protein (AccB), biotin carboxylase (AccC) and two subunits each of ACCase subunit alpha (AccA) and ACCase subunit beta (AccD). It depends on Zn(2+) as a cofactor.

It is found in the cytoplasm. The enzyme catalyses N(6)-carboxybiotinyl-L-lysyl-[protein] + acetyl-CoA = N(6)-biotinyl-L-lysyl-[protein] + malonyl-CoA. It participates in lipid metabolism; malonyl-CoA biosynthesis; malonyl-CoA from acetyl-CoA: step 1/1. In terms of biological role, component of the acetyl coenzyme A carboxylase (ACC) complex. Biotin carboxylase (BC) catalyzes the carboxylation of biotin on its carrier protein (BCCP) and then the CO(2) group is transferred by the transcarboxylase to acetyl-CoA to form malonyl-CoA. This Listeria welshimeri serovar 6b (strain ATCC 35897 / DSM 20650 / CCUG 15529 / CIP 8149 / NCTC 11857 / SLCC 5334 / V8) protein is Acetyl-coenzyme A carboxylase carboxyl transferase subunit beta.